We begin with the raw amino-acid sequence, 216 residues long: CsgBAC operon transcriptional regulatory protein (216 aa).

In terms of domain architecture, HTH luxR-type spans 149-214 (NSTESALLTH…QAVSWANDNL (66 aa)). The segment at residues 173–192 (NNEIARSLFISENTVKTHLY) is a DNA-binding region (H-T-H motif).

Its subcellular location is the cell inner membrane. Its function is as follows. The master regulator for adhesive curli fimbriae expression; necessary for transcription of the csgBAC/ymdA operon. Plays a positive role in biofilm formation. May have the capability to respond to starvation and/or high cell density by activating csgBA transcription. Low-level constitutive expression confers an adherent curli fimbriae-expressing phenotype, up-regulates 10 genes and down-regulates 14 others. This chain is CsgBAC operon transcriptional regulatory protein (csgD), found in Escherichia coli (strain K12).